Here is a 157-residue protein sequence, read N- to C-terminus: S-ribosylhomocysteine lyase (157 aa).

Histidine 60, histidine 64, and cysteine 127 together coordinate Fe cation.

This sequence belongs to the LuxS family. As to quaternary structure, homodimer. Requires Fe cation as cofactor.

It catalyses the reaction S-(5-deoxy-D-ribos-5-yl)-L-homocysteine = (S)-4,5-dihydroxypentane-2,3-dione + L-homocysteine. Involved in the synthesis of autoinducer 2 (AI-2) which is secreted by bacteria and is used to communicate both the cell density and the metabolic potential of the environment. The regulation of gene expression in response to changes in cell density is called quorum sensing. Catalyzes the transformation of S-ribosylhomocysteine (RHC) to homocysteine (HC) and 4,5-dihydroxy-2,3-pentadione (DPD). In Helicobacter acinonychis (strain Sheeba), this protein is S-ribosylhomocysteine lyase.